Reading from the N-terminus, the 494-residue chain is UPF0371 protein SPG_0310 (494 aa).

It belongs to the UPF0371 family.

The protein is UPF0371 protein SPG_0310 of Streptococcus pneumoniae serotype 19F (strain G54).